We begin with the raw amino-acid sequence, 157 residues long: 2-C-methyl-D-erythritol 2,4-cyclodiphosphate synthase (157 aa).

Residues Asp9 and His11 each coordinate a divalent metal cation. 4-CDP-2-C-methyl-D-erythritol 2-phosphate is bound by residues 9 to 11 and 35 to 36; these read DVH and HS. Residue His43 participates in a divalent metal cation binding. 4-CDP-2-C-methyl-D-erythritol 2-phosphate is bound by residues 57–59, 62–66, 101–107, 133–136, Phe140, and Arg143; these read DIG, FPDTD, AEKPKMA, and TTTE.

This sequence belongs to the IspF family. In terms of assembly, homotrimer. It depends on a divalent metal cation as a cofactor.

The enzyme catalyses 4-CDP-2-C-methyl-D-erythritol 2-phosphate = 2-C-methyl-D-erythritol 2,4-cyclic diphosphate + CMP. It functions in the pathway isoprenoid biosynthesis; isopentenyl diphosphate biosynthesis via DXP pathway; isopentenyl diphosphate from 1-deoxy-D-xylulose 5-phosphate: step 4/6. Functionally, involved in the biosynthesis of isopentenyl diphosphate (IPP) and dimethylallyl diphosphate (DMAPP), two major building blocks of isoprenoid compounds. Catalyzes the conversion of 4-diphosphocytidyl-2-C-methyl-D-erythritol 2-phosphate (CDP-ME2P) to 2-C-methyl-D-erythritol 2,4-cyclodiphosphate (ME-CPP) with a corresponding release of cytidine 5-monophosphate (CMP). The sequence is that of 2-C-methyl-D-erythritol 2,4-cyclodiphosphate synthase from Listeria monocytogenes serovar 1/2a (strain ATCC BAA-679 / EGD-e).